The primary structure comprises 179 residues: Large ribosomal subunit protein uL5 (179 aa).

This sequence belongs to the universal ribosomal protein uL5 family. In terms of assembly, part of the 50S ribosomal subunit; part of the 5S rRNA/L5/L18/L25 subcomplex. Contacts the 5S rRNA and the P site tRNA. Forms a bridge to the 30S subunit in the 70S ribosome.

In terms of biological role, this is one of the proteins that bind and probably mediate the attachment of the 5S RNA into the large ribosomal subunit, where it forms part of the central protuberance. In the 70S ribosome it contacts protein S13 of the 30S subunit (bridge B1b), connecting the 2 subunits; this bridge is implicated in subunit movement. Contacts the P site tRNA; the 5S rRNA and some of its associated proteins might help stabilize positioning of ribosome-bound tRNAs. The chain is Large ribosomal subunit protein uL5 from Buchnera aphidicola subsp. Cinara cedri (strain Cc).